The following is a 366-amino-acid chain: Fe-S cluster assembly protein DRE2 (366 aa).

Residues 8 to 167 (AQGSGRFLLL…KPDFGAQQAV (160 aa)) form an N-terminal SAM-like domain region. The tract at residues 100–136 (RNRDNQIWGSGSDSAAGLGSSDGGGGGGGGEKKSSSE) is disordered. The segment covering 108 to 118 (GSGSDSAAGLG) has biased composition (low complexity). The span at 119-128 (SSDGGGGGGG) shows a compositional bias: gly residues. The linker stretch occupies residues 168–258 (PLKLGRKKNL…EEELLGEFDM (91 aa)). Positions 268, 279, 282, and 284 each coordinate [2Fe-2S] cluster. The tract at residues 268-284 (CRPKAGKRRRACKDCTC) is fe-S binding site A. Residues Cys-329, Cys-332, Cys-340, and Cys-343 each coordinate [4Fe-4S] cluster. 2 consecutive short sequence motifs (cx2C motif) follow at residues 329 to 332 (CGNC) and 340 to 343 (CDGC). The segment at 329 to 343 (CGNCALGDAFRCDGC) is fe-S binding site B.

It belongs to the anamorsin family. As to quaternary structure, monomer. Interacts with TAH18. Interacts with MIA40. The cofactor is [2Fe-2S] cluster. Requires [4Fe-4S] cluster as cofactor.

Its subcellular location is the cytoplasm. The protein localises to the mitochondrion intermembrane space. Its function is as follows. Component of the cytosolic iron-sulfur (Fe-S) protein assembly (CIA) machinery required for the maturation of extramitochondrial Fe-S proteins. Part of an electron transfer chain functioning in an early step of cytosolic Fe-S biogenesis, facilitating the de novo assembly of a [4Fe-4S] cluster on the scaffold complex CFD1-NBP35. Electrons are transferred to DRE2 from NADPH via the FAD- and FMN-containing protein TAH18. TAH18-DRE2 are also required for the assembly of the diferric tyrosyl radical cofactor of ribonucleotide reductase (RNR), probably by providing electrons for reduction during radical cofactor maturation in the catalytic small subunit RNR2. This chain is Fe-S cluster assembly protein DRE2, found in Paracoccidioides lutzii (strain ATCC MYA-826 / Pb01) (Paracoccidioides brasiliensis).